The primary structure comprises 223 residues: Probable transaldolase (223 aa).

Lysine 86 acts as the Schiff-base intermediate with substrate in catalysis.

The protein belongs to the transaldolase family. Type 3B subfamily.

It is found in the cytoplasm. The catalysed reaction is D-sedoheptulose 7-phosphate + D-glyceraldehyde 3-phosphate = D-erythrose 4-phosphate + beta-D-fructose 6-phosphate. It functions in the pathway carbohydrate degradation; pentose phosphate pathway; D-glyceraldehyde 3-phosphate and beta-D-fructose 6-phosphate from D-ribose 5-phosphate and D-xylulose 5-phosphate (non-oxidative stage): step 2/3. Its function is as follows. Transaldolase is important for the balance of metabolites in the pentose-phosphate pathway. This is Probable transaldolase (tal) from Thermoplasma acidophilum (strain ATCC 25905 / DSM 1728 / JCM 9062 / NBRC 15155 / AMRC-C165).